The chain runs to 451 residues: Aspartate aminotransferase, mitochondrial (451 aa).

Positions 52, 155, and 216 each coordinate L-aspartate. Residue Lys286 is modified to N6-(pyridoxal phosphate)lysine. Arg423 is an L-aspartate binding site.

The protein belongs to the class-I pyridoxal-phosphate-dependent aminotransferase family. Homodimer. It depends on pyridoxal 5'-phosphate as a cofactor.

The protein localises to the mitochondrion matrix. The catalysed reaction is L-aspartate + 2-oxoglutarate = oxaloacetate + L-glutamate. In terms of biological role, plays a key role in amino acid metabolism. Important for metabolite exchange between mitochondria and cytosol. This is Aspartate aminotransferase, mitochondrial (AAT1) from Saccharomyces cerevisiae (strain ATCC 204508 / S288c) (Baker's yeast).